Consider the following 305-residue polypeptide: Homoserine kinase (305 aa).

95-105 (PHGRGLGSSSA) provides a ligand contact to ATP.

The protein belongs to the GHMP kinase family. Homoserine kinase subfamily.

Its subcellular location is the cytoplasm. It catalyses the reaction L-homoserine + ATP = O-phospho-L-homoserine + ADP + H(+). It functions in the pathway amino-acid biosynthesis; L-threonine biosynthesis; L-threonine from L-aspartate: step 4/5. Its function is as follows. Catalyzes the ATP-dependent phosphorylation of L-homoserine to L-homoserine phosphate. The protein is Homoserine kinase of Streptomyces avermitilis (strain ATCC 31267 / DSM 46492 / JCM 5070 / NBRC 14893 / NCIMB 12804 / NRRL 8165 / MA-4680).